Here is an 811-residue protein sequence, read N- to C-terminus: N-terminal acetyltransferase B complex subunit arm1 (811 aa).

This sequence belongs to the MDM20/NAA25 family. As to quaternary structure, component of the N-terminal acetyltransferase B (NatB) complex.

Its subcellular location is the cytoplasm. Functionally, non-catalytic subunit of the NatB N-terminal acetyltransferase, which catalyzes acetylation of the amino-terminal methionine residues of all proteins beginning with Met-Asp or Met-Glu and of some proteins beginning with Met-Asn or Met-Met. This chain is N-terminal acetyltransferase B complex subunit arm1 (arm1), found in Schizosaccharomyces pombe (strain 972 / ATCC 24843) (Fission yeast).